The following is a 1223-amino-acid chain: MVLAAAMSQDAEPSGPEQPDRDARSVPGAPAPPAPPGPRGMQPPPPPPPPPPPPPQAGLPQIIQNAAKLLDKTPFSVSNPNPLLPSPASLQLAQLQAQLTLHRLKLAQTAVTNNTAAATVLNQVLSKVAMSQPLFNQLRHPSMISAPHGHTGVPPHATTVPSTRFPSNAITFSAGQTRGPGPSVNLPSQPPNTMVMHPFSGVMPQTPAQPAVILGIGKTGPAPAAAGFYEYGKATSGQAYGSETDSQPSFLPASASTSGSVTYEGHYSHSGQDSQAAFPKDFYGPTSQGSQVAGTFAADTAGGLKGEVGPLLQGPNSQWESPHGFSGQSKPDLTAAPNLWPPHPSQPYELYDPEEPTPDRTPPSLGGRLNHSKQGFSGARRRAKEEQAVLSMRPLQVQELNDFHGVAPLHLPHICSICDKKVFDLKDWELHVKGKLHAQKCLLFSENTGVRCVLGPAEGTLCASPNSTAVYNPAGNEDYASNLGTSYAALPARTFTQSNPAFPSASPGMNFVQRKLGAGRVVHICNLPEGSCTENDVINLGLPFGKVTNYILMKSTNQAFLEMAYTEAAQAMVQYYQEKSAMINGEKLLIRMSKRYKELQLKKPGKTVAAIIQDIHSQRERDMFREADRYGPERPRSRSPVSRSLSPRSHTPSFTSCSSSHSPPGPSRADWGNGRDSWEHSPYARREEERGPAPWRENGEDKRDRTDMWAHDRKHYPRQVDKTELDERLEGGRGYREKHPRSGSPSSLHSVSGYKSREDGYYRKEPKGKSDKYLKQQQEAPGRSRRKDEARLRDGRHPYPDDSGKEDGLEAKGTKSKQSEKNRTKRPDRDQEGADDRKESRMAESEAGKEEQDSMEESPSSVGRQEKETESSDAENTRTRKEQDSESGSEAEGESWYPTNMEELVTVDEVGEEEDFIMEPDIPELEEIVPIDQKDKICPEICPCVTTTLELDLAQDFTKEGVKTIGNGATEISLKSPKEPPSASTSCPSDMDVEMPGLNLDAERKPAECETGLSLEGSGCYEQQAKGAESSDVCLAPMLEQMSSPKPAEERAWQPGPFLDDGKVGGTPEDGAAEGRPLEEKASTPTETDLQSQACQGVSTQENSGYVEMKSLDARSPEYTEVELKQPLSLPSWEPEDVFSELSIPLGVEFVVPRTGFYCKLCGLFYTSEEMAKMSHCRSAVHYRNLQKYLSQLAEEGLKETEGAGSPRPEDSGIVPHFERKKL.

Disordered regions lie at residues 1–59 (MVLA…QAGL), 238–288 (QAYG…PTSQ), and 306–381 (GEVG…GARR). Over residues 29–57 (APAPPAPPGPRGMQPPPPPPPPPPPPPQA) the composition is skewed to pro residues. Composition is skewed to polar residues over residues 238 to 261 (QAYG…SGSV) and 314 to 331 (GPNS…QSKP). The segment at 410-444 (HLPHICSICDKKVFDLKDWELHVKGKLHAQKCLLF) adopts a U1-type zinc-finger fold. An RRM domain is found at 520-595 (RVVHICNLPE…EKLLIRMSKR (76 aa)). Positions 626–636 (EADRYGPERPR) are enriched in basic and acidic residues. Disordered regions lie at residues 626-902 (EADR…TNME), 971-995 (EISL…DVEM), and 1042-1102 (MSSP…STQE). The tract at residues 630–657 (YGPERPRSRSPVSRSLSPRSHTPSFTSC) is RS. Residues S637, S639, S642, S644, S662, and S681 each carry the phosphoserine modification. A compositionally biased stretch (low complexity) spans 638 to 662 (RSPVSRSLSPRSHTPSFTSCSSSHS). Basic and acidic residues-rich tracts occupy residues 676 to 711 (DSWE…MWAH) and 718 to 737 (RQVD…GYRE). Over residues 742 to 752 (SGSPSSLHSVS) the composition is skewed to low complexity. S744 is subject to Phosphoserine. 2 stretches are compositionally biased toward basic and acidic residues: residues 755 to 774 (KSRE…DKYL) and 786 to 852 (RKDE…KEEQ). S803, S861, S872, S887, S889, S973, S976, and S1044 each carry phosphoserine. Over residues 864–884 (RQEKETESSDAENTRTRKEQD) the composition is skewed to basic and acidic residues. Residues 1083-1102 (STPTETDLQSQACQGVSTQE) show a composition bias toward polar residues. Residues S1111 and S1116 each carry the phosphoserine modification. Residues 1157–1188 (FYCKLCGLFYTSEEMAKMSHCRSAVHYRNLQK) form a Matrin-type zinc finger. Residues 1197-1223 (GLKETEGAGSPRPEDSGIVPHFERKKL) are disordered. Position 1206 is a phosphoserine (S1206).

In terms of assembly, associates with components of the U1 and U2 U1 small nuclear ribonucleoprotein complexes. In terms of processing, phosphorylation regulates the subcellular localization. Phosphorylation of Ser-637 and Ser-639 in the RS (arginine/serine-rich) region promotes nuclear localization of the protein. In contrast, phosphorylation of the C-terminal disordered region promotes localization to cytoplasmic ribonucleoprotein granules.

It is found in the nucleus. The protein resides in the cytoplasm. The protein localises to the cytoplasmic ribonucleoprotein granule. Functionally, RNA-binding protein that acts as a regulator of mRNA splicing of a subset of genes encoding key structural proteins involved in cardiac development, such as TTN (Titin), CACNA1C, CAMK2D or PDLIM5/ENH. Acts as a repressor of mRNA splicing: specifically binds the 5'UCUU-3' motif that is predominantly found within intronic sequences of pre-mRNAs, leading to the exclusion of specific exons in target transcripts. RBM20-mediated exon skipping is hormone-dependent and is essential for TTN isoform transition in both cardiac and skeletal muscles. RBM20-mediated exon skipping of TTN provides substrates for the formation of circular RNA (circRNAs) from the TTN transcripts. Together with RBM24, promotes the expression of short isoforms of PDLIM5/ENH in cardiomyocytes. In Sus scrofa (Pig), this protein is RNA-binding protein 20.